Reading from the N-terminus, the 65-residue chain is UPF0337 protein PA4738 (65 aa).

Belongs to the UPF0337 (CsbD) family.

This Pseudomonas aeruginosa (strain ATCC 15692 / DSM 22644 / CIP 104116 / JCM 14847 / LMG 12228 / 1C / PRS 101 / PAO1) protein is UPF0337 protein PA4738.